The chain runs to 407 residues: MYLGEDCGAVYVRENGELRCVSAVKTVDPPPQNRLFTRDFTFQLCIDTLPSASRAERRDHFIFTYNKQGSLRYSVKTLFDISLQFIADHVEHVDSLVGFPEQMADKLFSAAEERGKFAELRTASRALQLFCEAYGELVLKSLCLRNRYLLISERLEEIRQFQSLECLDLYGCRLGDNHELFKYITSEALSSLVKLFMGANCLSDAGLQRLTAPVRVMKKGLENLQLLDLSENHITEKGLRYLTCFKTLQKLDLSGTKVMMDVSLKGFFRMMGMALSETPLMDFTHTACKTEGWAEQVINQWEITAAEVPKKDPKPRTNALRFYGREKFVREMLNSWSETSDATNKDKAVPIHFCKVDDCVQSSPSGETHSTHKSRKRRLSTEEEQSAAPVAKRLPLSVEDLHLLNSY.

5 LRR repeats span residues Val138–Arg159, Ser163–Ile184, Ser191–Thr211, Asn223–Thr243, and Thr247–Phe268. The disordered stretch occupies residues Val360 to Pro389.

The protein belongs to the LRRC42 family.

This Danio rerio (Zebrafish) protein is Leucine-rich repeat-containing protein 42 (lrrc42).